Consider the following 227-residue polypeptide: MATWSNLNLQNSSSPLMEQLIFFHDHTLMILLMITVLVAYIMSMLFFNLYTNRFLLEGQTIEIIWTILPAITLIFIALPSLRLLYLLDESMDPLITMKTIGHQWYWSYEYMDFKNIIEFDSYMSALDKLSSFRLLDVDNRTILPMNTQIRTLVTAADVIHSWTVSALGVKTDATPGRLNQINFMINRPGLFYGQCSEICGANHSFMPIVIESVNLKNFINWIKNYSS.

At 1 to 26 (MATWSNLNLQNSSSPLMEQLIFFHDH) the chain is on the mitochondrial intermembrane side. The chain crosses the membrane as a helical span at residues 27–48 (TLMILLMITVLVAYIMSMLFFN). The Mitochondrial matrix segment spans residues 49–62 (LYTNRFLLEGQTIE). The helical transmembrane segment at 63–82 (IIWTILPAITLIFIALPSLR) threads the bilayer. Over 83-227 (LLYLLDESMD…FINWIKNYSS (145 aa)) the chain is Mitochondrial intermembrane. His-160, Cys-195, Glu-197, Cys-199, His-203, and Met-206 together coordinate Cu cation. A Mg(2+)-binding site is contributed by Glu-197.

Belongs to the cytochrome c oxidase subunit 2 family. Component of the cytochrome c oxidase (complex IV, CIV), a multisubunit enzyme composed of a catalytic core of 3 subunits and several supernumerary subunits. The complex exists as a monomer or a dimer and forms supercomplexes (SCs) in the inner mitochondrial membrane with ubiquinol-cytochrome c oxidoreductase (cytochrome b-c1 complex, complex III, CIII). The cofactor is Cu cation.

It localises to the mitochondrion inner membrane. The enzyme catalyses 4 Fe(II)-[cytochrome c] + O2 + 8 H(+)(in) = 4 Fe(III)-[cytochrome c] + 2 H2O + 4 H(+)(out). In terms of biological role, component of the cytochrome c oxidase, the last enzyme in the mitochondrial electron transport chain which drives oxidative phosphorylation. The respiratory chain contains 3 multisubunit complexes succinate dehydrogenase (complex II, CII), ubiquinol-cytochrome c oxidoreductase (cytochrome b-c1 complex, complex III, CIII) and cytochrome c oxidase (complex IV, CIV), that cooperate to transfer electrons derived from NADH and succinate to molecular oxygen, creating an electrochemical gradient over the inner membrane that drives transmembrane transport and the ATP synthase. Cytochrome c oxidase is the component of the respiratory chain that catalyzes the reduction of oxygen to water. Electrons originating from reduced cytochrome c in the intermembrane space (IMS) are transferred via the dinuclear copper A center (CU(A)) of subunit 2 and heme A of subunit 1 to the active site in subunit 1, a binuclear center (BNC) formed by heme A3 and copper B (CU(B)). The BNC reduces molecular oxygen to 2 water molecules using 4 electrons from cytochrome c in the IMS and 4 protons from the mitochondrial matrix. The sequence is that of Cytochrome c oxidase subunit 2 (COII) from Acheta domesticus (House cricket).